We begin with the raw amino-acid sequence, 121 residues long: Large ribosomal subunit protein bL12 (121 aa).

The protein belongs to the bacterial ribosomal protein bL12 family. In terms of assembly, homodimer. Part of the ribosomal stalk of the 50S ribosomal subunit. Forms a multimeric L10(L12)X complex, where L10 forms an elongated spine to which 2 to 4 L12 dimers bind in a sequential fashion. Binds GTP-bound translation factors.

In terms of biological role, forms part of the ribosomal stalk which helps the ribosome interact with GTP-bound translation factors. Is thus essential for accurate translation. This Malacoplasma penetrans (strain HF-2) (Mycoplasma penetrans) protein is Large ribosomal subunit protein bL12.